The following is a 211-amino-acid chain: C-type lectin domain family 2 member L (211 aa).

The disordered stretch occupies residues 1–53; it reads MEPAREPPARARPPPPAARPAPAAPRPRSPAEAEARGPEGLLRRSGSGYEGST. The segment covering 10–28 has biased composition (pro residues); sequence RARPPPPAARPAPAAPRPR. At Ser-29 the chain carries Phosphoserine. The chain crosses the membrane as a helical span at residues 66–86; sequence LLLGAIAVLLFAILVVMSILA. 3 cysteine pairs are disulfide-bonded: Cys-97–Cys-108, Cys-125–Cys-205, and Cys-184–Cys-197. Residues 104–206 enclose the C-type lectin domain; that stretch reads YGRKCYYFSE…CLTTRPWVCS (103 aa).

It localises to the membrane. In Rattus norvegicus (Rat), this protein is C-type lectin domain family 2 member L (Clec2l).